The sequence spans 72 residues: Gas vesicle protein A (72 aa).

The protein belongs to the gas vesicle GvpA family. As to quaternary structure, the gas vesicle shell is 2 nm thick and consists of a single layer of this protein. It forms helical ribs nearly perpendicular to the long axis of the vesicle.

It localises to the gas vesicle shell. In terms of biological role, gas vesicles are hollow, gas filled proteinaceous nanostructures found in some microorganisms. During planktonic growth they allow positioning of the organism at a favorable depth for light or nutrient acquisition. GvpA forms the protein shell. This is Gas vesicle protein A from Geotalea uraniireducens (strain Rf4) (Geobacter uraniireducens).